Reading from the N-terminus, the 477-residue chain is Ribulose bisphosphate carboxylase large chain (477 aa).

Positions 1-2 are excised as a propeptide; it reads MS. Pro-3 bears the N-acetylproline mark. The residue at position 14 (Lys-14) is an N6,N6,N6-trimethyllysine. Substrate contacts are provided by Asn-123 and Thr-173. Residue Lys-175 is the Proton acceptor of the active site. Substrate is bound at residue Lys-177. Residues Lys-201, Asp-203, and Glu-204 each contribute to the Mg(2+) site. Residue Lys-201 is modified to N6-carboxylysine. The active-site Proton acceptor is His-294. 3 residues coordinate substrate: Arg-295, His-327, and Ser-379.

Belongs to the RuBisCO large chain family. Type I subfamily. As to quaternary structure, heterohexadecamer of 8 large chains and 8 small chains; disulfide-linked. The disulfide link is formed within the large subunit homodimers. Mg(2+) is required as a cofactor. The disulfide bond which can form in the large chain dimeric partners within the hexadecamer appears to be associated with oxidative stress and protein turnover.

It localises to the plastid. Its subcellular location is the chloroplast. The catalysed reaction is 2 (2R)-3-phosphoglycerate + 2 H(+) = D-ribulose 1,5-bisphosphate + CO2 + H2O. The enzyme catalyses D-ribulose 1,5-bisphosphate + O2 = 2-phosphoglycolate + (2R)-3-phosphoglycerate + 2 H(+). RuBisCO catalyzes two reactions: the carboxylation of D-ribulose 1,5-bisphosphate, the primary event in carbon dioxide fixation, as well as the oxidative fragmentation of the pentose substrate in the photorespiration process. Both reactions occur simultaneously and in competition at the same active site. The sequence is that of Ribulose bisphosphate carboxylase large chain from Oryza nivara (Indian wild rice).